A 406-amino-acid polypeptide reads, in one-letter code: Cysteine desulfurase (406 aa).

Lys-226 carries the post-translational modification N6-(pyridoxal phosphate)lysine. Cys-364 acts as the Cysteine persulfide intermediate in catalysis.

The protein belongs to the class-V pyridoxal-phosphate-dependent aminotransferase family. Csd subfamily. In terms of assembly, homodimer. Interacts with SufE and the SufBCD complex composed of SufB, SufC and SufD. The interaction with SufE is required to mediate the direct transfer of the sulfur atom from the S-sulfanylcysteine. Pyridoxal 5'-phosphate is required as a cofactor.

It localises to the cytoplasm. It carries out the reaction (sulfur carrier)-H + L-cysteine = (sulfur carrier)-SH + L-alanine. It catalyses the reaction L-selenocysteine + AH2 = hydrogenselenide + L-alanine + A + H(+). Its pathway is cofactor biosynthesis; iron-sulfur cluster biosynthesis. In terms of biological role, cysteine desulfurases mobilize the sulfur from L-cysteine to yield L-alanine, an essential step in sulfur metabolism for biosynthesis of a variety of sulfur-containing biomolecules. Component of the suf operon, which is activated and required under specific conditions such as oxidative stress and iron limitation. Acts as a potent selenocysteine lyase in vitro, that mobilizes selenium from L-selenocysteine. Selenocysteine lyase activity is however unsure in vivo. In Klebsiella pneumoniae subsp. pneumoniae (strain ATCC 700721 / MGH 78578), this protein is Cysteine desulfurase.